The primary structure comprises 165 residues: 3-hydroxyacyl-[acyl-carrier-protein] dehydratase FabZ (165 aa).

H68 is an active-site residue.

The protein belongs to the thioester dehydratase family. FabZ subfamily.

The protein localises to the cytoplasm. The enzyme catalyses a (3R)-hydroxyacyl-[ACP] = a (2E)-enoyl-[ACP] + H2O. Its function is as follows. Involved in unsaturated fatty acids biosynthesis. Catalyzes the dehydration of short chain beta-hydroxyacyl-ACPs and long chain saturated and unsaturated beta-hydroxyacyl-ACPs. In Methylobacterium sp. (strain 4-46), this protein is 3-hydroxyacyl-[acyl-carrier-protein] dehydratase FabZ.